We begin with the raw amino-acid sequence, 93 residues long: Acylphosphatase (93 aa).

An Acylphosphatase-like domain is found at 7-93; the sequence is CLKAVISGKV…GEFRAFEILR (87 aa). Catalysis depends on residues R22 and N40.

This sequence belongs to the acylphosphatase family.

The enzyme catalyses an acyl phosphate + H2O = a carboxylate + phosphate + H(+). This is Acylphosphatase (acyP) from Acaryochloris marina (strain MBIC 11017).